A 444-amino-acid chain; its full sequence is MSQSYINVIGAGLAGSEAAYQIAERGIPVKLYEMRGVKSTPQHKTDNFAELVCSNSLRGDALTNAVGLLKEEMRRLGSVILESAEATRVPAGGALAVDRDGFSQMVTEKVANHPLIEVVRDEITELPTDVITVIATGPLTSDALAEKIHALNDGAGFYFYDAAAPIIDVNTIDMSKVYLKSRYDKGEAAYLNAPMTKQEFMDFHEALVNAEEAPLSSFEKEKYFEGCMPIEVMAKRGIKTMLYGPMKPVGLEYPDDYTGPRDGEFKTPYAVVQLRQDNAAGSLYNIVGFQTHLKWGEQKRVFQMIPGLENAEFVRYGVMHRNSYMDSPNLLEQTYRSKKQPNLFFAGQMTGVEGYVESAASGLVAGINAARLFKEESEAIFPETTAIGSLAHYITHADSKHFQPMNVNFGIIKELEGERIRDKKARYEKIAERALADLEEFLTV.

10 to 15 contacts FAD; it reads GAGLAG.

This sequence belongs to the MnmG family. TrmFO subfamily. The cofactor is FAD.

It localises to the cytoplasm. The catalysed reaction is uridine(54) in tRNA + (6R)-5,10-methylene-5,6,7,8-tetrahydrofolate + NADH + H(+) = 5-methyluridine(54) in tRNA + (6S)-5,6,7,8-tetrahydrofolate + NAD(+). It carries out the reaction uridine(54) in tRNA + (6R)-5,10-methylene-5,6,7,8-tetrahydrofolate + NADPH + H(+) = 5-methyluridine(54) in tRNA + (6S)-5,6,7,8-tetrahydrofolate + NADP(+). Catalyzes the folate-dependent formation of 5-methyl-uridine at position 54 (M-5-U54) in all tRNAs. In Streptococcus pneumoniae serotype 4 (strain ATCC BAA-334 / TIGR4), this protein is Methylenetetrahydrofolate--tRNA-(uracil-5-)-methyltransferase TrmFO.